Reading from the N-terminus, the 1001-residue chain is TonB-dependent receptor P3 (1001 aa).

An N-terminal signal peptide occupies residues M1–A26. The short motif at E109–Y116 is the TonB box element. The region spanning K120–K232 is the TBDR plug domain. The TBDR beta-barrel domain maps to K238 to F1001. The short motif at Y984 to F1001 is the TonB C-terminal box element.

The protein belongs to the TonB-dependent receptor family.

Its subcellular location is the cell outer membrane. TonB-dependent receptor probably involved in ulvan degradation. Ulvan is the main polysaccharide component of the Ulvales (green seaweed) cell wall. It is composed of disaccharide building blocks comprising 3-sulfated rhamnose (Rha3S) linked to D-glucuronic acid (GlcA), L-iduronic acid (IduA), or D-xylose (Xyl). The TonB-dependent receptor may mediate transport of ulvan oligosaccharides from the surface of the outer membrane to the periplasm for subsequent degradation. This is TonB-dependent receptor P3 from Formosa agariphila (strain DSM 15362 / KCTC 12365 / LMG 23005 / KMM 3901 / M-2Alg 35-1).